Reading from the N-terminus, the 708-residue chain is Glycogen [starch] synthase isoform 1 (708 aa).

Arginine 20 serves as a coordination point for UDP. A Phosphoserine modification is found at serine 159. Residues histidine 193 and arginine 199 each coordinate UDP-alpha-D-glucose. The alpha-D-glucose 6-phosphate site is built by histidine 280, glutamate 281, glutamine 283, histidine 286, and lysine 290. A UDP-binding site is contributed by arginine 320. Position 320 (arginine 320) interacts with UDP-alpha-D-glucose. Serine 363 carries the post-translational modification Phosphoserine. Histidine 500 contacts alpha-D-glucose 6-phosphate. UDP-alpha-D-glucose contacts are provided by glutamate 509, tryptophan 511, and glycine 512. Residue threonine 514 participates in UDP binding. Serine 560 carries the phosphoserine modification. Alpha-D-glucose 6-phosphate-binding residues include arginine 583 and arginine 587. Phosphoserine occurs at positions 651 and 655. 2 positions are modified to phosphoserine; by PKA: serine 660 and serine 662. The tract at residues 687–708 (STNGAIDNDDDDNDTSAYYEDN) is disordered. Residues 693–708 (DNDDDDNDTSAYYEDN) show a composition bias toward acidic residues.

This sequence belongs to the glycosyltransferase 3 family.

It catalyses the reaction [(1-&gt;4)-alpha-D-glucosyl](n) + UDP-alpha-D-glucose = [(1-&gt;4)-alpha-D-glucosyl](n+1) + UDP + H(+). It participates in glycan biosynthesis; glycogen biosynthesis. Allosteric activation by glucose-6-phosphate, and phosphorylation by a cAMP-dependent kinase. In terms of biological role, glycogen synthase participates in the glycogen biosynthetic process along with glycogenin and glycogen branching enzyme. Extends the primer composed of a few glucose units formed by glycogenin by adding new glucose units to it. In this context, glycogen synthase transfers the glycosyl residue from UDP-Glc to the non-reducing end of alpha-1,4-glucan. This is Glycogen [starch] synthase isoform 1 (GSY1) from Saccharomyces cerevisiae (strain ATCC 204508 / S288c) (Baker's yeast).